We begin with the raw amino-acid sequence, 256 residues long: Vesicle-associated protein 1-1 (256 aa).

M1 is subject to N-acetylmethionine. Residues 1–232 lie on the Cytoplasmic side of the membrane; the sequence is MSNIDLIGMS…RRESKKSQSG (232 aa). S2 is subject to N-acetylserine; in Vesicle-associated protein 1-1, N-terminally processed. In terms of domain architecture, MSP spans 22-142; the sequence is LLTVEPLDLQ…EETKLRVTYV (121 aa). Residues 142–169 form a disordered region; it reads VAPPRPPSPVHEGSEEGSSPRASVSDNG. At S149 the chain carries Phosphoserine. A compositionally biased stretch (polar residues) spans 157–169; the sequence is EGSSPRASVSDNG. A coiled-coil region spans residues 187–232; it reads HQENTSEARALITKLTEEKQSAIQLNNRLQRELDQLRRESKKSQSG. A helical; Anchor for type IV membrane protein transmembrane segment spans residues 233–253; the sequence is GIPFMYVLLVGLIGLILGYIM.

The protein belongs to the VAMP-associated protein (VAP) (TC 9.B.17) family. Homodimer or homooligomer. Interacts with the cowpea mosaic virus (CPMV) NTP-binding protein (NTB). Interacts with NET3C.

It localises to the endoplasmic reticulum membrane. The protein localises to the protein storage vacuole membrane. In terms of biological role, part of a membrane-cytoskeletal adapter complex that forms a bridge between the endoplasmic reticulum and the plasma membrane. Associates with microtubules. This is Vesicle-associated protein 1-1 (PVA11) from Arabidopsis thaliana (Mouse-ear cress).